Here is a 455-residue protein sequence, read N- to C-terminus: UDP-N-acetylmuramoylalanine--D-glutamate ligase (455 aa).

ATP is bound at residue 120 to 126 (GSNGKTT).

The protein belongs to the MurCDEF family.

It is found in the cytoplasm. It catalyses the reaction UDP-N-acetyl-alpha-D-muramoyl-L-alanine + D-glutamate + ATP = UDP-N-acetyl-alpha-D-muramoyl-L-alanyl-D-glutamate + ADP + phosphate + H(+). Its pathway is cell wall biogenesis; peptidoglycan biosynthesis. Cell wall formation. Catalyzes the addition of glutamate to the nucleotide precursor UDP-N-acetylmuramoyl-L-alanine (UMA). This chain is UDP-N-acetylmuramoylalanine--D-glutamate ligase, found in Pediococcus pentosaceus (strain ATCC 25745 / CCUG 21536 / LMG 10740 / 183-1w).